The primary structure comprises 291 residues: Alpha-soluble NSF attachment protein (291 aa).

4 TPR repeats span residues 14–51 (ADKRLRGGNFFKMFGGGSSRYDDAASDYTKAANLFKMS), 77–110 (AASSYVLAAGCYKKGNVIDAITCLKAAIEYYTDE), 117–150 (AKHQKEIAELYEAEGDFDQAIASYQIASDYFDGE), and 157–190 (HQCLLKIALFSAQLERYEKSIEIYEQVAAASLDN).

This sequence belongs to the SNAP family. In terms of assembly, interacts with nsfA and probably SNARE proteins.

The protein resides in the cytoplasmic vesicle membrane. Functionally, may be required for vesicular transport between the endoplasmic reticulum and the Golgi apparatus. Involved in vesicle fusion with nsfA and probably SNARE proteins. The polypeptide is Alpha-soluble NSF attachment protein (snpA) (Dictyostelium discoideum (Social amoeba)).